The following is a 525-amino-acid chain: Mitochondrial-processing peptidase subunit alpha (525 aa).

Residues 1 to 33 constitute a mitochondrion transit peptide; the sequence is MAAVVLAATRLLRGSGSWGCSRLRFGPPAYRRF. An N6-succinyllysine modification is found at lysine 64. Lysine 299 bears the N6-acetyllysine mark.

Belongs to the peptidase M16 family. In terms of assembly, heterodimer of PMPCA (alpha) and PMPCB (beta) subunits, forming the mitochondrial processing protease (MPP) in which PMPCA is involved in substrate recognition and binding and PMPCB is the catalytic subunit.

Its subcellular location is the mitochondrion matrix. The protein resides in the mitochondrion inner membrane. Its function is as follows. Substrate recognition and binding subunit of the essential mitochondrial processing protease (MPP), which cleaves the mitochondrial sequence off newly imported precursors proteins. The polypeptide is Mitochondrial-processing peptidase subunit alpha (PMPCA) (Pongo abelii (Sumatran orangutan)).